The chain runs to 254 residues: Type III pantothenate kinase (254 aa).

ATP is bound at residue 6 to 13 (DVGNTNIV). 107–110 (GADR) provides a ligand contact to substrate. Asp-109 (proton acceptor) is an active-site residue. Asp-129 is a binding site for K(+). Thr-132 contributes to the ATP binding site. Residue Thr-184 coordinates substrate.

This sequence belongs to the type III pantothenate kinase family. Homodimer. It depends on NH4(+) as a cofactor. K(+) serves as cofactor.

It is found in the cytoplasm. It carries out the reaction (R)-pantothenate + ATP = (R)-4'-phosphopantothenate + ADP + H(+). Its pathway is cofactor biosynthesis; coenzyme A biosynthesis; CoA from (R)-pantothenate: step 1/5. In terms of biological role, catalyzes the phosphorylation of pantothenate (Pan), the first step in CoA biosynthesis. The polypeptide is Type III pantothenate kinase (Exiguobacterium sp. (strain ATCC BAA-1283 / AT1b)).